We begin with the raw amino-acid sequence, 508 residues long: Photosystem II CP47 reaction center protein (508 aa).

6 consecutive transmembrane segments (helical) span residues 21–36 (SVHIMHTALVSGWAGS), 101–115 (IVFSGLCFLAAIWHW), 140–156 (GIHLFLSGVACFGFGAF), 203–218 (IAAGTLGILAGLFHLS), 237–252 (VLSSSIAAVFFAAFVV), and 457–472 (SFALLFFFGHIWHGAR).

Belongs to the PsbB/PsbC family. PsbB subfamily. PSII is composed of 1 copy each of membrane proteins PsbA, PsbB, PsbC, PsbD, PsbE, PsbF, PsbH, PsbI, PsbJ, PsbK, PsbL, PsbM, PsbT, PsbX, PsbY, PsbZ, Psb30/Ycf12, at least 3 peripheral proteins of the oxygen-evolving complex and a large number of cofactors. It forms dimeric complexes. Requires Binds multiple chlorophylls. PSII binds additional chlorophylls, carotenoids and specific lipids. as cofactor.

The protein localises to the plastid. It is found in the chloroplast thylakoid membrane. One of the components of the core complex of photosystem II (PSII). It binds chlorophyll and helps catalyze the primary light-induced photochemical processes of PSII. PSII is a light-driven water:plastoquinone oxidoreductase, using light energy to abstract electrons from H(2)O, generating O(2) and a proton gradient subsequently used for ATP formation. The protein is Photosystem II CP47 reaction center protein of Nymphaea alba (White water-lily).